Here is a 706-residue protein sequence, read N- to C-terminus: Integrator complex subunit 13 (706 aa).

The interval 564–603 (PPEEEERKKRGRKREDKEDKSEKAVKDYEQEKSWQDSERL) is disordered. The stretch at 567-622 (EEERKKRGRKREDKEDKSEKAVKDYEQEKSWQDSERLKGILERGKEELAEAEIIKD) forms a coiled coil. The short motif at 572–582 (KRGRKREDKED) is the Nuclear localization signal (NLS) element. Residue K611 forms a Glycyl lysine isopeptide (Lys-Gly) (interchain with G-Cter in SUMO2) linkage. The span at 615 to 636 (AEAEIIKDSPDSPEPPNKKPLV) shows a compositional bias: basic and acidic residues. The disordered stretch occupies residues 615-650 (AEAEIIKDSPDSPEPPNKKPLVEMDETPQVEKSKGP). Phosphoserine occurs at positions 623, 626, and 678. A cleavage module binding motif (CMBM) region spans residues 649-694 (GPVSLLSLWSNRINTANSRKHQEFAGRLNSVNNRAELYQHLKEENG).

The protein belongs to the Integrator subunit 13 family. Component of the Integrator complex, composed of core subunits INTS1, INTS2, INTS3, INTS4, INTS5, INTS6, INTS7, INTS8, INTS9/RC74, INTS10, INTS11/CPSF3L, INTS12, INTS13, INTS14 and INTS15. The core complex associates with protein phosphatase 2A subunits PPP2CA and PPP2R1A, to form the Integrator-PP2A (INTAC) complex. INTS13 is part of the tail subcomplex, composed of INTS10, INTS13, INTS14 and INTS15. Interacts with transcription factors ZNF609 and ZNF655. Interacts with PAFAH1B1; this interaction may be required for proper recruitment of dynein complexes to the nuclear envelope at prophase. As to expression, widely expressed. Tends to be up-regulated in seminomas compared to normal testis.

It is found in the nucleus. The protein resides in the cytoplasm. Its function is as follows. Component of the integrator complex, a multiprotein complex that terminates RNA polymerase II (Pol II) transcription in the promoter-proximal region of genes. The integrator complex provides a quality checkpoint during transcription elongation by driving premature transcription termination of transcripts that are unfavorably configured for transcriptional elongation: the complex terminates transcription by (1) catalyzing dephosphorylation of the C-terminal domain (CTD) of Pol II subunit POLR2A/RPB1 and SUPT5H/SPT5, (2) degrading the exiting nascent RNA transcript via endonuclease activity and (3) promoting the release of Pol II from bound DNA. The integrator complex is also involved in terminating the synthesis of non-coding Pol II transcripts, such as enhancer RNAs (eRNAs), small nuclear RNAs (snRNAs), telomerase RNAs and long non-coding RNAs (lncRNAs). Within the integrator complex, INTS13 is part of the integrator tail module and acts as a platform for the recruitment of transcription factors at promoters. At prophase, mediates recruitment of cytoplasmic dynein to the nuclear envelope, a step important for proper centrosome-nucleus coupling. At G2/M phase, may be required for proper spindle formation and execution of cytokinesis. This is Integrator complex subunit 13 from Homo sapiens (Human).